Reading from the N-terminus, the 166-residue chain is Interferon gamma (166 aa).

The first 23 residues, 1–23, serve as a signal peptide directing secretion; it reads MKYTSYILALQLCVLLGFSGSYG. Residue Gln24 is modified to Pyrrolidone carboxylic acid. Asn39 and Asn106 each carry an N-linked (GlcNAc...) asparagine glycan.

This sequence belongs to the type II (or gamma) interferon family. As to quaternary structure, homodimer. Interacts with IFNGR1 (via extracellular domain); this interaction promotes IFNGR1 dimerization. In terms of tissue distribution, released primarily from activated T lymphocytes.

Its subcellular location is the secreted. Functionally, type II interferon produced by immune cells such as T-cells and NK cells that plays crucial roles in antimicrobial, antiviral, and antitumor responses by activating effector immune cells and enhancing antigen presentation. Primarily signals through the JAK-STAT pathway after interaction with its receptor IFNGR1 to affect gene regulation. Upon IFNG binding, IFNGR1 intracellular domain opens out to allow association of downstream signaling components JAK2, JAK1 and STAT1, leading to STAT1 activation, nuclear translocation and transcription of IFNG-regulated genes. Many of the induced genes are transcription factors such as IRF1 that are able to further drive regulation of a next wave of transcription. Plays a role in class I antigen presentation pathway by inducing a replacement of catalytic proteasome subunits with immunoproteasome subunits. In turn, increases the quantity, quality, and repertoire of peptides for class I MHC loading. Increases the efficiency of peptide generation also by inducing the expression of activator PA28 that associates with the proteasome and alters its proteolytic cleavage preference. Up-regulates as well MHC II complexes on the cell surface by promoting expression of several key molecules such as cathepsins B/CTSB, H/CTSH, and L/CTSL. Participates in the regulation of hematopoietic stem cells during development and under homeostatic conditions by affecting their development, quiescence, and differentiation. The sequence is that of Interferon gamma (IFNG) from Cervus elaphus (Red deer).